The sequence spans 390 residues: Succinate--CoA ligase [ADP-forming] subunit beta (390 aa).

An ATP-grasp domain is found at 9–245 (KHLLKKYNIP…TTQEDEHETM (237 aa)). Residues K46, 53–55 (GRG), E99, S102, and E107 each bind ATP. Positions 200 and 214 each coordinate Mg(2+). Substrate contacts are provided by residues N265 and 322–324 (GIV).

It belongs to the succinate/malate CoA ligase beta subunit family. Heterotetramer of two alpha and two beta subunits. It depends on Mg(2+) as a cofactor.

The enzyme catalyses succinate + ATP + CoA = succinyl-CoA + ADP + phosphate. It catalyses the reaction GTP + succinate + CoA = succinyl-CoA + GDP + phosphate. It participates in carbohydrate metabolism; tricarboxylic acid cycle; succinate from succinyl-CoA (ligase route): step 1/1. Functionally, succinyl-CoA synthetase functions in the citric acid cycle (TCA), coupling the hydrolysis of succinyl-CoA to the synthesis of either ATP or GTP and thus represents the only step of substrate-level phosphorylation in the TCA. The beta subunit provides nucleotide specificity of the enzyme and binds the substrate succinate, while the binding sites for coenzyme A and phosphate are found in the alpha subunit. The sequence is that of Succinate--CoA ligase [ADP-forming] subunit beta from Coxiella burnetii (strain Dugway 5J108-111).